We begin with the raw amino-acid sequence, 221 residues long: Placenta growth factor (221 aa).

An N-terminal signal peptide occupies residues Met-1–Ala-18. Asn-33 is a glycosylation site (N-linked (GlcNAc...) asparagine). 3 disulfide bridges follow: Cys-52–Cys-94, Cys-83–Cys-128, and Cys-87–Cys-130. N-linked (GlcNAc...) asparagine glycosylation occurs at Asn-101. Residues Gln-175–Arg-221 are disordered. Residues His-192–Lys-203 are compositionally biased toward basic residues. The interval Pro-193 to Arg-213 is heparin-binding. Positions Pro-204 to Arg-221 are enriched in basic and acidic residues.

The protein belongs to the PDGF/VEGF growth factor family. Antiparallel homodimer; disulfide-linked. Also found as heterodimer with VEGFA/VEGF. Isoform PlGF-3 is found both as homodimer and as monomer. N-glycosylated. While the three isoforms are present in most placental tissues, PlGF-2 is specific to early (8 week) placenta and only PlGF-1 is found in the colon and mammary carcinomas.

It is found in the secreted. In terms of biological role, growth factor active in angiogenesis and endothelial cell growth, stimulating their proliferation and migration. It binds to the receptor FLT1/VEGFR-1. Isoform PlGF-2 binds NRP1/neuropilin-1 and NRP2/neuropilin-2 in a heparin-dependent manner. Also promotes cell tumor growth. This Homo sapiens (Human) protein is Placenta growth factor (PGF).